The following is a 278-amino-acid chain: Diaminopimelate epimerase (278 aa).

Substrate-binding residues include Asn-13, Gln-49, and Asn-68. The Proton donor role is filled by Cys-77. Substrate-binding positions include 78–79 (GN), Asn-161, Asn-194, and 212–213 (ER). Catalysis depends on Cys-221, which acts as the Proton acceptor. 222–223 (GT) lines the substrate pocket.

This sequence belongs to the diaminopimelate epimerase family. Homodimer.

It is found in the cytoplasm. It catalyses the reaction (2S,6S)-2,6-diaminopimelate = meso-2,6-diaminopimelate. The protein operates within amino-acid biosynthesis; L-lysine biosynthesis via DAP pathway; DL-2,6-diaminopimelate from LL-2,6-diaminopimelate: step 1/1. Its function is as follows. Catalyzes the stereoinversion of LL-2,6-diaminopimelate (L,L-DAP) to meso-diaminopimelate (meso-DAP), a precursor of L-lysine and an essential component of the bacterial peptidoglycan. The sequence is that of Diaminopimelate epimerase from Nitrosomonas eutropha (strain DSM 101675 / C91 / Nm57).